The sequence spans 153 residues: Hsp90 co-chaperone HCH1 (153 aa).

This sequence belongs to the AHA1 family. As to quaternary structure, monomer. Interacts with HSP82.

It localises to the cytoplasm. It is found in the nucleus. Functionally, co-chaperone that binds to the molecular chaperone HSP82 and stimulates its ATPase activity. Although not essential, it confers thermotolerance when intracellular levels of HSP82 are limiting. The protein is Hsp90 co-chaperone HCH1 (HCH1) of Saccharomyces cerevisiae (strain ATCC 204508 / S288c) (Baker's yeast).